The chain runs to 410 residues: Sensor histidine kinase GlnK (410 aa).

Topologically, residues 1–15 (MLITVPLAGELKFYP) are extracellular. Residues 16–36 (LNEEFRVSFGAPVFFFFLSLL) form a helical membrane-spanning segment. The Cytoplasmic portion of the chain corresponds to 37–38 (RH). The chain crosses the membrane as a helical span at residues 39-59 (VPAVLPGFLTGAAVFIFRVFL). Over 60 to 71 (ELWGGGHNGLTP) the chain is Extracellular. Residues 72–92 (ILYDQASGFFFYMTYACLFSI) traverse the membrane as a helical segment. Residues 93-102 (LKANRFRERP) are Cytoplasmic-facing. The helical transmembrane segment at 103-123 (IMLGFIGFMIEVVSDCVELTV) threads the bilayer. The Extracellular portion of the chain corresponds to 124–139 (QFLIFHTVVTPEKITD). Residues 140-160 (IAVIAISHTFIVMSFYSVLKL) form a helical membrane-spanning segment. Over 161 to 410 (YETQSREKQT…LPVRHLIQKG (250 aa)) the chain is Cytoplasmic. A Histidine kinase domain is found at 189–405 (VHLKKTLKTT…VFAIRLPVRH (217 aa)). A Phosphohistidine; by autocatalysis modification is found at H190.

Homotrimer. Under poor nitrogen source such as nitrate, the complex between GlnK and AmtB, which are the transmembrane ammonium transporter and its cognate regulator, respectively, interacts with TnrA. GlnK-ATP complex are not able to bind TnrA.

The protein resides in the cell membrane. It catalyses the reaction ATP + protein L-histidine = ADP + protein N-phospho-L-histidine.. In terms of biological role, member of the two-component regulatory system GlnK/GlnL that positively regulates the expression of the glsA-glnT operon in response to glutamine. It seems that autophosphorylated GlnK transfers a phosphoryl group to GlnL, which positively regulates the expression of the glsA-glnT operon. Interaction between GlnK-AmtB complex and TnrA protects TnrA from proteolytic degradation. This chain is Sensor histidine kinase GlnK, found in Bacillus subtilis (strain 168).